We begin with the raw amino-acid sequence, 288 residues long: Single myb histone 4 (288 aa).

Disordered regions lie at residues 1–42 (MGAP…PVLS), 62–87 (GLGS…SQPL), and 181–206 (DSLA…KPSK). Residues 1 to 60 (MGAPKQKWTSEEEDALRAGVRKHGAGKWRTIQKDPEFSPVLSSRSNIDLKDKWRNLSFSA) form the HTH myb-type domain. Residues 28-56 (WRTIQKDPEFSPVLSSRSNIDLKDKWRNL) constitute a DNA-binding region (H-T-H motif). The segment covering 76–87 (PSSSPSSSSQPL) has biased composition (low complexity). In terms of domain architecture, H15 spans 113–181 (TLPKYGAMIM…KIDKSYRLPD (69 aa)). Residues 230-250 (KVADAEAKAHDAHDQTMEAER) adopt a coiled-coil conformation.

Belongs to the histone H1/H5 family. SMH subfamily. Forms a homodimer and heterodimers.

The protein resides in the nucleus. It is found in the chromosome. It localises to the nucleolus. Its subcellular location is the telomere. Binds preferentially double-stranded telomeric repeats, but may also bind to the single telomeric strand. This is Single myb histone 4 (SMH4) from Zea mays (Maize).